The sequence spans 159 residues: Probable metallophosphoesterase MPN_126 (159 aa).

Mn(2+)-binding residues include D9, H11, D34, N53, H75, H107, and H109.

This sequence belongs to the metallophosphoesterase superfamily. YfcE family. Mn(2+) serves as cofactor.

In Mycoplasma pneumoniae (strain ATCC 29342 / M129 / Subtype 1) (Mycoplasmoides pneumoniae), this protein is Probable metallophosphoesterase MPN_126.